A 62-amino-acid polypeptide reads, in one-letter code: Photosystem II reaction center protein Z (62 aa).

A run of 2 helical transmembrane segments spans residues 8–28 (AVFALIATSSILLISVPVVFA) and 41–61 (FSGTSLWIGLVFLVGILNSLI).

This sequence belongs to the PsbZ family. PSII is composed of 1 copy each of membrane proteins PsbA, PsbB, PsbC, PsbD, PsbE, PsbF, PsbH, PsbI, PsbJ, PsbK, PsbL, PsbM, PsbT, PsbY, PsbZ, Psb30/Ycf12, at least 3 peripheral proteins of the oxygen-evolving complex and a large number of cofactors. It forms dimeric complexes.

It is found in the plastid. It localises to the chloroplast thylakoid membrane. In terms of biological role, may control the interaction of photosystem II (PSII) cores with the light-harvesting antenna, regulates electron flow through the 2 photosystem reaction centers. PSII is a light-driven water plastoquinone oxidoreductase, using light energy to abstract electrons from H(2)O, generating a proton gradient subsequently used for ATP formation. The chain is Photosystem II reaction center protein Z from Jasminum nudiflorum (Winter jasmine).